Reading from the N-terminus, the 583-residue chain is MKRSLQALYCQLLSFLLTLALTEALVFAAQEPSPRESLQVSPSGTIPGTMVTASLSSTRHSSMVATPASVVTPTPHPDGPSSQATAPMATTTPHLDGHPPTNTISTIMATASTPHSEGSLSTGPLPAAMATTSSHSEGRAPGETAPTILLTKPGEATSRPPTAPSRATIRRPPRPPGSSRKGAGSSPRPIPAAPSGHAGRKDGQRGRNQSSTHLGQKRPLGKIFQIYKGNFTGSVEPDPSTFTPRNPLWGYSSSPQPQTVAATSAPSRTSWVPPTTPLVPVEDKPSLSRADQGGGSTFTSQGGEPDATAASGTPASQQRAPVPSQRPHGDPQDGSSHSDSWLTVTPGTSRPPSTNSGVFAATTGPIQAAFDASVSVPSEGLPQGTSLAPQAPAHPTWASESTVSQAEEKAVATPTPTMMGRVPSPLSTVVSTATGNFLNRLVPAGTWKPGTAGNISHVAEGDKPQQRATICLSKMDIAWVILAISVPISSCSVLLTVCCLRRKKKPANPENSLSYWNNAITMDYFSKHAVELPREIQSLETSEDQLSEPRSPANGDYRDTGMVLVNPFCQETLFVGNDQVSEI.

Residues 7 to 27 (ALYCQLLSFLLTLALTEALVF) form a helical membrane-spanning segment. An interacts with SH3GL2 region spans residues 31–176 (EPSPRESLQV…ATIRRPPRPP (146 aa)). Disordered regions lie at residues 71–360 (VTPT…GVFA) and 376–404 (VPSE…STVS). 2 stretches are compositionally biased toward polar residues: residues 80 to 93 (PSSQ…TTTP) and 100 to 122 (PTNT…SLST). A compositionally biased stretch (low complexity) spans 177-187 (GSSRKGAGSSP). The tract at residues 180–413 (RKGAGSSPRP…SQAEEKAVAT (234 aa)) is interacts with DST (isoform 1). Composition is skewed to polar residues over residues 251 to 273 (YSSS…SWVP), 310 to 319 (ASGTPASQQR), and 333 to 357 (DGSS…TNSG). Residues 477 to 497 (IAWVILAISVPISSCSVLLTV) traverse the membrane as a helical segment. Residues 498-583 (CCLRRKKKPA…FVGNDQVSEI (86 aa)) form an interaction with CYFIP2 region.

In terms of assembly, interacts with DST (isoform 1). Interacts with SH3GL2. Interacts (via N-terminus) with CYFIP1 and CYFIP2; the interactions associate TMEM108 with the WAVE1 complex. Glycosylated.

Its subcellular location is the membrane. The protein resides in the postsynaptic density. It localises to the endosome membrane. It is found in the cell projection. The protein localises to the axon. Its subcellular location is the dendrite. The protein resides in the early endosome. In terms of biological role, transmembrane protein required for proper cognitive functions. Involved in the development of dentate gyrus (DG) neuron circuitry, is necessary for AMPA receptors surface expression and proper excitatory postsynaptic currents of DG granule neurons. Regulates the organization and stability of the microtubule network of sensory neurons to allow axonal transport. Through the interaction with DST, mediates the docking of the dynein/dynactin motor complex to vesicle cargos for retrograde axonal transport. In hippocampal neurons, required for BDNF-dependent dendrite outgrowth. Cooperates with SH3GL2 and recruits the WAVE1 complex to facilitate actin-dependent BDNF:NTRK2 early endocytic trafficking and mediate signaling from early endosomes. This Bos taurus (Bovine) protein is Transmembrane protein 108.